The primary structure comprises 800 residues: Signaling protein YkoW (800 aa).

A run of 7 helical transmembrane segments spans residues 5–27 (VTYNTTLICLSILIACTASYISL), 44–66 (WLIGGSLIMGFGIWSMHFVGMMA), 76–98 (EFMPLMAAIGASVSGSFVSLYFV), 103–125 (LTYYRLLTGSVVLGASIASMHYI), 135–157 (IIYEPILFTVSIIIAIAASFVSL), 178–200 (VSSIVMGIGISGMHYTGMLAATF), and 215–237 (TFHWSIFVTLIIFCIQTLLLFSS). The MHYT domain maps to 7–201 (YNTTLICLSI…YTGMLAATFH (195 aa)). Positions 255 to 319 (QRFQSLIVHN…FEQVKKDKQA (65 aa)) constitute a PAS domain. A GGDEF domain is found at 402–536 (YNTVVFFLDL…NKSKYRYYSF (135 aa)). One can recognise an EAL domain in the interval 545–798 (KLNQEMVLRE…QFEQFIIEQP (254 aa)).

The protein resides in the cell membrane. Functionally, probable signaling protein whose physiological role is not yet known. This Bacillus subtilis (strain 168) protein is Signaling protein YkoW (ykoW).